Consider the following 526-residue polypeptide: Rho guanine nucleotide exchange factor 3 (526 aa).

The disordered stretch occupies residues 20-40; that stretch reads ELPPASGPAKDAEEPSNKRVK. Residues Ser47 and Ser70 each carry the phosphoserine modification. Positions 122-304 constitute a DH domain; it reads KRQEAIFELS…QGIVAEINTK (183 aa). The region spanning 291–449 is the PH domain; it reads INIIQGIVAE…WLNCIRQAKE (159 aa). The interval 464-526 is disordered; it reads EGSFLNPTTG…GNSRHGESNV (63 aa). Polar residues predominate over residues 466-475; it reads SFLNPTTGSR.

As to quaternary structure, interacts with RHOA and RHOB.

The protein localises to the cytoplasm. Functionally, acts as a guanine nucleotide exchange factor (GEF) for RhoA and RhoB GTPases. This Pongo abelii (Sumatran orangutan) protein is Rho guanine nucleotide exchange factor 3 (ARHGEF3).